The sequence spans 276 residues: Large ribosomal subunit protein uL2 (276 aa).

The interval 219 to 268 (TVRGSVMNPNDHPHGGGEGRQPVGRKSPMTPWGKPALGLKTRNKKAKSSK) is disordered.

Belongs to the universal ribosomal protein uL2 family. In terms of assembly, part of the 50S ribosomal subunit. Forms a bridge to the 30S subunit in the 70S ribosome.

Functionally, one of the primary rRNA binding proteins. Required for association of the 30S and 50S subunits to form the 70S ribosome, for tRNA binding and peptide bond formation. It has been suggested to have peptidyltransferase activity; this is somewhat controversial. Makes several contacts with the 16S rRNA in the 70S ribosome. This is Large ribosomal subunit protein uL2 from Lactococcus lactis subsp. cremoris (strain MG1363).